Here is a 454-residue protein sequence, read N- to C-terminus: Zinc finger protein 474 (454 aa).

Residues 48 to 85 (RGEKIKTNPRKNRPGTVILSKQSSRRIMSGSQPRPPVI) form a disordered region. The segment covering 66–79 (LSKQSSRRIMSGSQ) has biased composition (polar residues). The segment at 91–120 (GFRVCYICGREFGSQSLGIHEPQCLEKWRV) adopts a C2HC/C3H-type 1 zinc-finger fold. Zn(2+)-binding residues include cysteine 95, cysteine 98, histidine 110, and cysteine 114. Positions 125 to 146 (LPKHLRRPEPSKPPPFSGSGSY) are disordered. C2HC/C3H-type zinc fingers lie at residues 162–191 (QLLP…KVEG), 218–247 (RTVI…KWKV), 281–310 (QLVS…QPSG), 352–381 (PTIV…KWHN), and 425–454 (QLVP…KVAK). Zn(2+) contacts are provided by cysteine 166, cysteine 169, histidine 181, cysteine 185, cysteine 222, cysteine 225, histidine 237, and cysteine 241. A disordered region spans residues 256–282 (FRQPLPQKPQPLLTGQPKHAGPRQGQL). Zn(2+) is bound by residues cysteine 285, cysteine 288, histidine 300, cysteine 304, cysteine 356, cysteine 359, histidine 371, cysteine 375, cysteine 429, cysteine 432, histidine 444, and cysteine 448. Residues 299–345 (VHQRSCKAQPSGPKVQDLTLGSRGGLKESTNPKPQRNMAAPPVTDKP) are disordered.

Requires Zn(2+) as cofactor.

The chain is Zinc finger protein 474 (ZNF474) from Bos taurus (Bovine).